The following is a 183-amino-acid chain: Maltose O-acetyltransferase (183 aa).

Asn-83 is a binding site for acetyl-CoA. The active-site Proton donor/acceptor is the His-113. Acetyl-CoA is bound by residues Gly-140, Ser-158, 163–164 (TK), Arg-178, and Lys-181.

This sequence belongs to the transferase hexapeptide repeat family. As to quaternary structure, homodimer.

The catalysed reaction is D-maltose + acetyl-CoA = 1-O-acetylmaltose + CoA. Catalyzes the CoA-dependent transfer of an acetyl group to maltose and other sugars. Acetylates glucose exclusively at the C6 position and maltose at the C6 position of the non-reducing end glucosyl moiety. Is able to acetylate maltooligosaccharides. In Escherichia coli (strain K12), this protein is Maltose O-acetyltransferase (maa).